Consider the following 330-residue polypeptide: MLDFLAITLSGKPPQVIQGETVNLKWQWLGEGILTLVPHRSYTQSVVISAGIHGNETAPIEILNQLVTDLLAGQLTLAVRLLVLLGNPPAIRKGKRYLSNDINRMFGGRYQHYTPSDETRRASTLEQRVMAFFQASHTSERLHYDLHTAIRGSYHPRFGLLPYQQTPYSAAMFRWLRDIELDALVMHTSAGGTFAHFSSERCQAASCTLELGKALPFGENQLSQFSAITQGLRSLVSDSALPARKTENMKYYRVVKSLLRQHPDFKLRGAEDTVNFTRFAQGTLLTEQPNDNYRVEHPYEWILFPNPHVALGLRAGMMLVKMCESELPIT.

Positions 53, 56, and 147 each coordinate Zn(2+). The active site involves E210.

It belongs to the AspA/AstE family. Succinylglutamate desuccinylase subfamily. Requires Zn(2+) as cofactor.

It catalyses the reaction N-succinyl-L-glutamate + H2O = L-glutamate + succinate. It functions in the pathway amino-acid degradation; L-arginine degradation via AST pathway; L-glutamate and succinate from L-arginine: step 5/5. Functionally, transforms N(2)-succinylglutamate into succinate and glutamate. The polypeptide is Succinylglutamate desuccinylase (Yersinia pseudotuberculosis serotype O:3 (strain YPIII)).